Here is a 52-residue protein sequence, read N- to C-terminus: Ornatin-B (52 aa).

The short motif at Arg42–Asp44 is the Cell attachment site element.

It belongs to the ornatin family.

The protein resides in the secreted. Functionally, potent inhibitor of fibrinogen interaction with platelet receptors expressed on glycoprotein IIb-IIIa complex. May prevent blood from clotting during either feeding and/or storage of ingested blood. The sequence is that of Ornatin-B from Placobdella ornata (Turtle leech).